Consider the following 179-residue polypeptide: Adenine phosphoribosyltransferase (179 aa).

This sequence belongs to the purine/pyrimidine phosphoribosyltransferase family. As to quaternary structure, homodimer.

It localises to the cytoplasm. The enzyme catalyses AMP + diphosphate = 5-phospho-alpha-D-ribose 1-diphosphate + adenine. The protein operates within purine metabolism; AMP biosynthesis via salvage pathway; AMP from adenine: step 1/1. Catalyzes a salvage reaction resulting in the formation of AMP, that is energically less costly than de novo synthesis. In Helicobacter pylori (strain G27), this protein is Adenine phosphoribosyltransferase.